We begin with the raw amino-acid sequence, 466 residues long: Asparagine--tRNA ligase (466 aa).

This sequence belongs to the class-II aminoacyl-tRNA synthetase family. In terms of assembly, homodimer.

It is found in the cytoplasm. It catalyses the reaction tRNA(Asn) + L-asparagine + ATP = L-asparaginyl-tRNA(Asn) + AMP + diphosphate + H(+). In Salmonella choleraesuis (strain SC-B67), this protein is Asparagine--tRNA ligase.